The primary structure comprises 181 residues: Inorganic pyrophosphatase (181 aa).

3 residues coordinate substrate: lysine 16, arginine 30, and tyrosine 42. Aspartate 52, aspartate 57, and aspartate 89 together coordinate Mg(2+). Tyrosine 126 provides a ligand contact to substrate.

This sequence belongs to the PPase family. Homohexamer. It depends on Mg(2+) as a cofactor.

The protein localises to the cytoplasm. It carries out the reaction diphosphate + H2O = 2 phosphate + H(+). Its function is as follows. Catalyzes the hydrolysis of inorganic pyrophosphate (PPi) forming two phosphate ions. This is Inorganic pyrophosphatase from Malacoplasma penetrans (strain HF-2) (Mycoplasma penetrans).